Consider the following 275-residue polypeptide: Undecaprenyl-diphosphatase (275 aa).

The next 8 helical transmembrane spans lie at L2–I22, F43–Y63, W83–L103, L111–I131, T147–G167, Y186–L206, L221–I241, and A255–H275.

It belongs to the UppP family.

It localises to the cell membrane. The catalysed reaction is di-trans,octa-cis-undecaprenyl diphosphate + H2O = di-trans,octa-cis-undecaprenyl phosphate + phosphate + H(+). Catalyzes the dephosphorylation of undecaprenyl diphosphate (UPP). Confers resistance to bacitracin. The chain is Undecaprenyl-diphosphatase from Lactiplantibacillus plantarum (strain ATCC BAA-793 / NCIMB 8826 / WCFS1) (Lactobacillus plantarum).